Reading from the N-terminus, the 45-residue chain is Mu-conotoxin-like Cal 12.1.2d (45 aa).

4 disulfide bridges follow: C3–C16, C11–C28, C18–C33, and C27–C39. W17 bears the 6'-bromotryptophan mark. A 4-hydroxyproline modification is found at P23. 6'-bromotryptophan is present on residues W37 and W38. P40 is modified (4-hydroxyproline).

As to expression, expressed by the venom duct.

The protein resides in the secreted. In terms of biological role, mu-conotoxins block voltage-gated sodium channels. This toxin reversibly blocks voltage-gated sodium channel in cephalopods, with no alteration in the voltage dependence of sodium conductance or on the kinetics of inactivation. The chain is Mu-conotoxin-like Cal 12.1.2d from Californiconus californicus (California cone).